The following is a 567-amino-acid chain: uncharacterized protein (567 aa).

6 helical membrane passes run 20-40 (FTILAFFYISSIFFLLCSGVL), 69-89 (SLETAWYLISAVAVFIASVFI), 95-115 (AYLTLLAITWIVLTITDVALI), 126-146 (ILLNILYNLFGAILLSLFMCL), 168-188 (IPLVSAIIIAILITAVIYLLF), and 528-548 (IFGSSIMDILKYIFGLGLLAI).

The protein resides in the cell membrane. This is an uncharacterized protein from Escherichia coli (strain K12).